The sequence spans 210 residues: Large ribosomal subunit protein uL4 (210 aa).

A disordered region spans residues 41-79 (MANARQGTASTKTRAEVRGGGRKPWRQKGTGRARAGSNR). A compositionally biased stretch (polar residues) spans 43–52 (NARQGTASTK). Positions 60–71 (GGRKPWRQKGTG) are enriched in basic residues.

The protein belongs to the universal ribosomal protein uL4 family. Part of the 50S ribosomal subunit.

Functionally, one of the primary rRNA binding proteins, this protein initially binds near the 5'-end of the 23S rRNA. It is important during the early stages of 50S assembly. It makes multiple contacts with different domains of the 23S rRNA in the assembled 50S subunit and ribosome. In terms of biological role, forms part of the polypeptide exit tunnel. The chain is Large ribosomal subunit protein uL4 from Cyanothece sp. (strain PCC 7425 / ATCC 29141).